Reading from the N-terminus, the 619-residue chain is Chaperone protein HscA homolog (619 aa).

This sequence belongs to the heat shock protein 70 family.

Chaperone involved in the maturation of iron-sulfur cluster-containing proteins. Has a low intrinsic ATPase activity which is markedly stimulated by HscB. This Shewanella frigidimarina (strain NCIMB 400) protein is Chaperone protein HscA homolog.